We begin with the raw amino-acid sequence, 303 residues long: Putative monooxygenase p33MONOX (303 aa).

Disordered regions lie at residues 1 to 20, 37 to 56, 66 to 96, 156 to 233, and 260 to 283; these read MASRQPEVPALAPSGPLGKM, LEDPAPMTPPPSDMGSIPWK, HLDKTEEGAASVSSLAVTPSPATDSSDKAPV, KLQS…LQKS, and RVGEDPATFKPPKMDVPMVEGKKQ. A Phosphothreonine modification is found at T44. Positions 67 to 77 match the Flavin-containing monooxygenase motif motif; sequence LDKTEEGAASV. A compositionally biased stretch (polar residues) spans 76–89; the sequence is SVSSLAVTPSPATD. The span at 170–183 shows a compositional bias: low complexity; sequence ASAQSTPSSTPHAS. Position 175 is a phosphothreonine (T175). S183 carries the post-translational modification Phosphoserine.

It belongs to the P33MONOX family. Interacts with NELFB, NOL12 and PRNP. As to expression, expressed in neuronal pyramidal cells of the hippocampus and in the neurons of the cortex.

The protein resides in the cytoplasm. Functionally, potential NADPH-dependent oxidoreductase. May be involved in the regulation of neuronal survival, differentiation and axonal outgrowth. The chain is Putative monooxygenase p33MONOX (P33monox) from Mus musculus (Mouse).